The following is a 261-amino-acid chain: Fructoselysine 6-kinase (261 aa).

Belongs to the carbohydrate kinase PfkB family. In terms of assembly, monomer.

The enzyme catalyses N(6)-(D-fructosyl)-L-lysine + ATP = N(6)-(6-phospho-D-fructosyl)-L-lysine + ADP + H(+). The protein operates within carbohydrate metabolism; fructoselysine degradation; D-glucose 6-phosphate and lysine from fructoselysine: step 1/2. Catalyzes the ATP-dependent phosphorylation of fructoselysine to fructoselysine 6-phosphate. May function in a fructoselysine degradation pathway that allows S.flexneri to grow on fructoselysine or psicoselysine. The polypeptide is Fructoselysine 6-kinase (frlD) (Shigella flexneri).